A 231-amino-acid polypeptide reads, in one-letter code: Urease subunit gamma/beta (231 aa).

Positions 1–101 (MLLTPTELER…LVTVHQPIRP (101 aa)) are urease gamma. The interval 102–231 (GQLPLAVMPT…RARAQFFKGA (130 aa)) is urease beta.

It in the N-terminal section; belongs to the urease gamma subunit family. The protein in the C-terminal section; belongs to the urease beta subunit family. In terms of assembly, heterohexamer of 3 UreC (alpha) and 3 UreAB (gamma/beta) subunits.

The protein localises to the cytoplasm. It carries out the reaction urea + 2 H2O + H(+) = hydrogencarbonate + 2 NH4(+). The protein operates within nitrogen metabolism; urea degradation; CO(2) and NH(3) from urea (urease route): step 1/1. The sequence is that of Urease subunit gamma/beta from Pseudomonas syringae pv. syringae (strain B728a).